Reading from the N-terminus, the 456-residue chain is MKKVFIKTYGCQMNEYDSDKMSDVLNAAEGLVPTDTPEDADVILFNTCSVREKAQEKVFSELGRVKALKALKPDLVVGVGGCVASQEGASIVARAPYVDVVFGPQTLHRLPDLIAARRRTGRSQVDVSFPEIEKFDHLPPARVDGASAYVSIMEGCSKYCSYCVVPYTRGEEVSRPFDDVLAEVAGLAEQGVREVTLLGQNVNAYIGKMGDTSERADFALLLEYVAEIPGIERIRYTTSHPKEFSSRLIEAYATNPKLVDHLHLPVQHGSDRILMAMKRGYTVLEYKSSIRKLRAIRPNISIATDFIVGFPGETDADFAKTMDLIHEIGYDTSFSFIYSPRPGTPAANLHDDTPQAVKLERLKHLQATIEENVARISQGMVGSVQRILVEGPSRKDPTELHGRTENNRVVNFALPDLPQVRREQLIGQMLDVRIVHAFPHSLRGEVAEERMASAAH.

Positions 2 to 119 constitute an MTTase N-terminal domain; the sequence is KKVFIKTYGC…LPDLIAARRR (118 aa). Cys-11, Cys-48, Cys-82, Cys-156, Cys-160, and Cys-163 together coordinate [4Fe-4S] cluster. The Radical SAM core domain maps to 142-375; it reads RVDGASAYVS…QATIEENVAR (234 aa). Residues 378–448 enclose the TRAM domain; sequence QGMVGSVQRI…PHSLRGEVAE (71 aa).

Belongs to the methylthiotransferase family. MiaB subfamily. Monomer. The cofactor is [4Fe-4S] cluster.

The protein resides in the cytoplasm. It catalyses the reaction N(6)-dimethylallyladenosine(37) in tRNA + (sulfur carrier)-SH + AH2 + 2 S-adenosyl-L-methionine = 2-methylsulfanyl-N(6)-dimethylallyladenosine(37) in tRNA + (sulfur carrier)-H + 5'-deoxyadenosine + L-methionine + A + S-adenosyl-L-homocysteine + 2 H(+). In terms of biological role, catalyzes the methylthiolation of N6-(dimethylallyl)adenosine (i(6)A), leading to the formation of 2-methylthio-N6-(dimethylallyl)adenosine (ms(2)i(6)A) at position 37 in tRNAs that read codons beginning with uridine. This chain is tRNA-2-methylthio-N(6)-dimethylallyladenosine synthase, found in Ralstonia pickettii (strain 12J).